The following is a 199-amino-acid chain: MAKVLVLYYSAYGHIEAMANAVAEGAREAGATVDIKRVPELVPPDVAKASHYKLDQAAPVATIGDLADYDAIVVGTGTRFGRMASQMANFLDQAGGLWAKGALHGKVGGAFTSTATQHGGQETTLFSIITNLLHFGMVVVGLNYGFAGQMKLDEVTGGAPYGATTITGGDGSRQPSANELAGARYQGKTIAETAIKLHG.

The region spanning 4-190 (VLVLYYSAYG…AGARYQGKTI (187 aa)) is the Flavodoxin-like domain. FMN is bound by residues 10–15 (SAYGHI) and 78–80 (TRF). Y12 is a binding site for NAD(+). Residue W98 participates in substrate binding. Residues 113–119 (STATQHG) and H134 each bind FMN.

Belongs to the WrbA family. The cofactor is FMN.

The enzyme catalyses a quinone + NADH + H(+) = a quinol + NAD(+). The catalysed reaction is a quinone + NADPH + H(+) = a quinol + NADP(+). This is NAD(P)H dehydrogenase (quinone) from Rhodopseudomonas palustris (strain BisB5).